The following is a 422-amino-acid chain: Glutamyl-tRNA reductase (422 aa).

Substrate is bound by residues 49–52, Ser-108, 113–115, and Gln-119; these read TCNR and EPQ. The active-site Nucleophile is the Cys-50. Residue 188–193 participates in NADP(+) binding; the sequence is GAGQTI.

It belongs to the glutamyl-tRNA reductase family. Homodimer.

The catalysed reaction is (S)-4-amino-5-oxopentanoate + tRNA(Glu) + NADP(+) = L-glutamyl-tRNA(Glu) + NADPH + H(+). It functions in the pathway porphyrin-containing compound metabolism; protoporphyrin-IX biosynthesis; 5-aminolevulinate from L-glutamyl-tRNA(Glu): step 1/2. In terms of biological role, catalyzes the NADPH-dependent reduction of glutamyl-tRNA(Glu) to glutamate 1-semialdehyde (GSA). In Marinomonas sp. (strain MWYL1), this protein is Glutamyl-tRNA reductase.